The chain runs to 701 residues: Acetyl-coenzyme A synthetase, cytoplasmic (701 aa).

The tract at residues 1 to 41 is disordered; sequence MGLPEERVRSGSGSRGQEEAGAGGRARSWSPPPEVSRSAHV. Residues 1–107 are interaction with TFEB; that stretch reads MGLPEERVRS…GATTNICYNV (107 aa). 3 positions are modified to phosphoserine: serine 28, serine 30, and serine 36. Position 219–222 (219–222) interacts with CoA; the sequence is RGEK. 3 positions are modified to phosphoserine: serine 263, serine 265, and serine 267. Threonine 363 contributes to the CoA binding site. Position 418 is an N6-acetyllysine (lysine 418). Residues 439–441, 463–468, aspartate 552, and arginine 567 contribute to the ATP site; these read GEP and DTFWQT. Residues serine 575 and arginine 636 each coordinate CoA. Residues 656-668 carry the Nuclear localization signal motif; the sequence is KTRSGKIMRRVLR. Position 659 is a phosphoserine; by AMPK (serine 659). At lysine 661 the chain carries N6-acetyllysine.

It belongs to the ATP-dependent AMP-binding enzyme family. As to quaternary structure, monomer. Interacts with TFEB. AMPK-mediated phosphorylated form at Ser-659 interacts with KPNA1; this interaction results in nuclear translocation of ACSS2. Interacts with the 'Thr-172' phosphorylated form of PRKAA2. Interacts with CREBBP. Post-translationally, reversibly acetylated at Lys-661. The acetyl-CoA synthase activity is inhibited by acetylation and activated by deacetylation mediated by the deacetylases SIRT1 and SIRT3. In terms of processing, glucose deprivation results in its AMPK-dependent phosphorylation at Ser-659, which leads to exposure of its nuclear localization signal, required for its interaction with KPNA1 and subsequent translocation to the nucleus.

It localises to the cytoplasm. Its subcellular location is the cytosol. The protein resides in the nucleus. It carries out the reaction acetate + ATP + CoA = acetyl-CoA + AMP + diphosphate. The enzyme catalyses propanoate + ATP + CoA = propanoyl-CoA + AMP + diphosphate. With respect to regulation, inhibited by acetylation at Lys-661 and activated by deacetylation mediated by the deacetylases SIRT1 and SIRT3. In terms of biological role, catalyzes the synthesis of acetyl-CoA from short-chain fatty acids. Acetate is the preferred substrate. Can also utilize propionate with a much lower affinity. Nuclear ACSS2 promotes glucose deprivation-induced lysosomal biogenesis and autophagy, tumor cell survival and brain tumorigenesis. Glucose deprivation results in AMPK-mediated phosphorylation of ACSS2 leading to its translocation to the nucleus where it binds to TFEB and locally produces acetyl-CoA for histone acetylation in the promoter regions of TFEB target genes thereby activating their transcription. The regulation of genes associated with autophagy and lysosomal activity through ACSS2 is important for brain tumorigenesis and tumor survival. Acts as a chromatin-bound transcriptional coactivator that up-regulates histone acetylation and expression of neuronal genes. Can be recruited to the loci of memory-related neuronal genes to maintain a local acetyl-CoA pool, providing the substrate for histone acetylation and promoting the expression of specific genes, which is essential for maintaining long-term spatial memory. This Homo sapiens (Human) protein is Acetyl-coenzyme A synthetase, cytoplasmic (ACSS2).